The primary structure comprises 501 residues: Postreplication repair E3 ubiquitin-protein ligase rad18 (501 aa).

Residues 34 to 72 (CHVCKDFYDSPMLTSCNHTFCSLCIRRCLSVDSKCPLCR) form an RING-type zinc finger. A disordered region spans residues 111–154 (QAILPDQAGPSSPSKRKATEMEGPKEEDPESKRPRRSTRSTRAR). Basic and acidic residues predominate over residues 127 to 142 (KATEMEGPKEEDPESK). A compositionally biased stretch (basic residues) spans 143 to 152 (RPRRSTRSTR). The UBZ4-type zinc-finger motif lies at 186–214 (LVACPICLTRMKEQQVDRHLDTSCPGSPQ). 4 residues coordinate Zn(2+): Cys189, Cys192, His204, and Cys209. The tract at residues 203-250 (RHLDTSCPGSPQAASKRRPIPAQTPQPSTFPSFNTRLTSQTNQKPPER) is disordered. Over residues 225–246 (QTPQPSTFPSFNTRLTSQTNQK) the composition is skewed to polar residues. Residues 256–290 (YSMLRDTALRKKLSELGLSTHGSRQLLEKRHKEWI) enclose the SAP domain. The segment at 377 to 501 (IKRQTLDGNG…GMKKPNPETC (125 aa)) is disordered.

It belongs to the RAD18 family. In terms of assembly, interacts with E2 mus-8/ubc2, forming a complex with ubiquitin ligase activity.

The protein localises to the nucleus. The enzyme catalyses S-ubiquitinyl-[E2 ubiquitin-conjugating enzyme]-L-cysteine + [acceptor protein]-L-lysine = [E2 ubiquitin-conjugating enzyme]-L-cysteine + N(6)-ubiquitinyl-[acceptor protein]-L-lysine.. It participates in protein modification; protein ubiquitination. In terms of biological role, E3 RING-finger protein, member of the UBC2/RAD6 epistasis group. Associates to the E2 ubiquitin conjugating enzyme mus-8/ubc2 to form the mus-8/ubc2-uvs-2/rad18 ubiquitin ligase complex involved in postreplicative repair (PRR) of damaged DNA. The polypeptide is Postreplication repair E3 ubiquitin-protein ligase rad18 (uvs-2) (Neurospora crassa (strain ATCC 24698 / 74-OR23-1A / CBS 708.71 / DSM 1257 / FGSC 987)).